The primary structure comprises 124 residues: Small ribosomal subunit protein uS12 (124 aa).

Asp89 carries the 3-methylthioaspartic acid modification.

This sequence belongs to the universal ribosomal protein uS12 family. In terms of assembly, part of the 30S ribosomal subunit. Contacts proteins S8 and S17. May interact with IF1 in the 30S initiation complex.

In terms of biological role, with S4 and S5 plays an important role in translational accuracy. Functionally, interacts with and stabilizes bases of the 16S rRNA that are involved in tRNA selection in the A site and with the mRNA backbone. Located at the interface of the 30S and 50S subunits, it traverses the body of the 30S subunit contacting proteins on the other side and probably holding the rRNA structure together. The combined cluster of proteins S8, S12 and S17 appears to hold together the shoulder and platform of the 30S subunit. The protein is Small ribosomal subunit protein uS12 of Mannheimia succiniciproducens (strain KCTC 0769BP / MBEL55E).